Reading from the N-terminus, the 264-residue chain is 5'-nucleotidase SurE (264 aa).

Residues aspartate 10, aspartate 11, serine 43, and asparagine 99 each coordinate a divalent metal cation.

Belongs to the SurE nucleotidase family. The cofactor is a divalent metal cation.

It localises to the cytoplasm. It carries out the reaction a ribonucleoside 5'-phosphate + H2O = a ribonucleoside + phosphate. Nucleotidase that shows phosphatase activity on nucleoside 5'-monophosphates. The sequence is that of 5'-nucleotidase SurE from Methanococcus maripaludis (strain C5 / ATCC BAA-1333).